The sequence spans 137 residues: Small ribosomal subunit protein uS12 (137 aa).

The disordered stretch occupies residues 1-57 (MPTINQLVRKPRKSKTKQSDSPVLNRGFNSKKKQFTNLNSPQKRGVCTRVGTMTPRK). Aspartate 102 bears the 3-methylthioaspartic acid mark. A disordered region spans residues 118-137 (SGVDGRRQGRSLYGTKKPKN).

This sequence belongs to the universal ribosomal protein uS12 family. As to quaternary structure, part of the 30S ribosomal subunit. Contacts proteins S8 and S17. May interact with IF1 in the 30S initiation complex.

With S4 and S5 plays an important role in translational accuracy. Functionally, interacts with and stabilizes bases of the 16S rRNA that are involved in tRNA selection in the A site and with the mRNA backbone. Located at the interface of the 30S and 50S subunits, it traverses the body of the 30S subunit contacting proteins on the other side and probably holding the rRNA structure together. The combined cluster of proteins S8, S12 and S17 appears to hold together the shoulder and platform of the 30S subunit. The chain is Small ribosomal subunit protein uS12 from Staphylococcus epidermidis (strain ATCC 12228 / FDA PCI 1200).